We begin with the raw amino-acid sequence, 398 residues long: 2,3,4,5-tetrahydropyridine-2,6-dicarboxylate N-succinyltransferase (398 aa).

Residue Glu268 is the Acyl-anhydride intermediate of the active site. Residues Arg270, Gly285, Ser288, Ala311, 326–327 (DG), Gly334, Lys361, and 374–377 (RQNS) each bind succinyl-CoA.

Belongs to the type 2 tetrahydrodipicolinate N-succinyltransferase family. Homotrimer.

The protein localises to the cytoplasm. The enzyme catalyses (S)-2,3,4,5-tetrahydrodipicolinate + succinyl-CoA + H2O = (S)-2-succinylamino-6-oxoheptanedioate + CoA. Its pathway is amino-acid biosynthesis; L-lysine biosynthesis via DAP pathway; LL-2,6-diaminopimelate from (S)-tetrahydrodipicolinate (succinylase route): step 1/3. Its function is as follows. Catalyzes the conversion of the cyclic tetrahydrodipicolinate (THDP) into the acyclic N-succinyl-L-2-amino-6-oxopimelate using succinyl-CoA. The polypeptide is 2,3,4,5-tetrahydropyridine-2,6-dicarboxylate N-succinyltransferase (Sulfurimonas denitrificans (strain ATCC 33889 / DSM 1251) (Thiomicrospira denitrificans (strain ATCC 33889 / DSM 1251))).